Here is a 491-residue protein sequence, read N- to C-terminus: Serine/threonine-protein kinase 3 (491 aa).

Met1 carries the N-acetylmethionine modification. Residue Ser15 is modified to Phosphoserine; by PLK1. A Protein kinase domain is found at 27-278; the sequence is FDVLEKLGEG…ATQLLQHPFI (252 aa). ATP contacts are provided by residues 33-41 and Lys56; that span reads LGEGSYGSV. Thr117 carries the phosphothreonine; by PKB/AKT1 modification. The active-site Proton acceptor is Asp146. 2 residues coordinate Mg(2+): Asn151 and Asp164. A phosphothreonine; by autocatalysis mark is found at Thr174 and Thr180. Positions 287-328 form a coiled coil; that stretch reads LRDLITEAMEIKAKRHEEQQRELEEEEENSDEDELDSHTMVK. A disordered region spans residues 301-327; the sequence is RHEEQQRELEEEEENSDEDELDSHTMV. Residues 309 to 321 show a composition bias toward acidic residues; it reads LEEEEENSDEDEL. Ser316 is subject to Phosphoserine. A phosphothreonine; by autocatalysis mark is found at Thr336 and Thr378. The tract at residues 370–392 is disordered; that stretch reads EDEEEEDGTMKRNATSPQVQRPS. Residues 381 to 390 are compositionally biased toward polar residues; the sequence is RNATSPQVQR. The residue at position 384 (Thr384) is a Phosphothreonine; by PKB/AKT1. Phosphoserine is present on residues Ser385 and Ser444. An SARAH domain is found at 437 to 484; that stretch reads FDFLKNLSLEELQMRLKALDPMMEREIEELRQRYTAKRQPILDAMDAK. Positions 442 to 475 form a coiled coil; that stretch reads NLSLEELQMRLKALDPMMEREIEELRQRYTAKRQ.

This sequence belongs to the protein kinase superfamily. STE Ser/Thr protein kinase family. STE20 subfamily. In terms of assembly, homodimer; mediated via the coiled-coil region. Interacts with NORE1, which inhibits autoactivation. Interacts with and stabilizes SAV1. Interacts with RAF1, which prevents dimerization and phosphorylation. Interacts with RASSF1. Interacts (via SARAH domain) with isoform 1 of NEK2. Interacts with ESR1 only in the presence of SAV1. Interacts with PKB/AKT1. Forms a tripartite complex with MOBKL1B and STK38. Interacts with RASSF2 (via SARAH domain). Interacts with DLG5 (via PDZ domain 3). Interacts with LATS1; this interaction is inhibited in the presence of DLG5. Interacts with MARK3 in the presence of DLG5. Interacts with RASSF5; this interaction inhibits STK3 autoactivation through heterodimerization. Interacts (when phosphorylated) with SLMAP (via FHA domain); the interaction associates STK3 with the STRIPAK complex. Mg(2+) is required as a cofactor. In terms of processing, autophosphorylated on two residues Thr-174 and Thr-180, leading to activation. Phosphorylation at Thr-117 and Thr-384 by PKB/AKT1, leads to inhibition of its: cleavage, kinase activity, autophosphorylation at Thr-180, binding to RASSF1 and nuclear translocation, and increase in its binding to RAF1. Phosphorylated at Ser-15 by PLK1, leading to activation. When autophosphorylated at Thr-180, recruits STRIPAK complex and promotes PP2A-mediated dephosphorylation and inactivation of STK3. Post-translationally, proteolytically cleaved by caspase-3 during apoptosis. Proteolytic cleavage results in kinase activation and nuclear translocation of the truncated form (MST1/N). Ubiquitinated by TRIM69; leading to its redistribution to the perinuclear cytoskeleton, where it is phosphorylated by PLK1 and subsequently activated. In terms of tissue distribution, expressed at high levels in adult kidney, skeletal and placenta tissues and at very low levels in adult heart, lung and brain tissues.

The protein localises to the cytoplasm. The protein resides in the nucleus. It is found in the cytoskeleton. Its subcellular location is the microtubule organizing center. It localises to the centrosome. The enzyme catalyses L-seryl-[protein] + ATP = O-phospho-L-seryl-[protein] + ADP + H(+). The catalysed reaction is L-threonyl-[protein] + ATP = O-phospho-L-threonyl-[protein] + ADP + H(+). Its activity is regulated as follows. Inhibited by the C-terminal non-catalytic region. Activated by caspase-cleavage. Full activation also requires homodimerization and autophosphorylation of Thr-180, which are inhibited by the proto-oncogene product RAF1. Activated by RASSF1 which acts by preventing its dephosphorylation. When autophosphorylated at Thr-180, recruits STRIPAK complex and promotes PP2A-mediated dephosphorylation and inactivation of STK3. Functionally, stress-activated, pro-apoptotic kinase which, following caspase-cleavage, enters the nucleus and induces chromatin condensation followed by internucleosomal DNA fragmentation. Key component of the Hippo signaling pathway which plays a pivotal role in organ size control and tumor suppression by restricting proliferation and promoting apoptosis. The core of this pathway is composed of a kinase cascade wherein STK3/MST2 and STK4/MST1, in complex with its regulatory protein SAV1, phosphorylates and activates LATS1/2 in complex with its regulatory protein MOB1, which in turn phosphorylates and inactivates YAP1 oncoprotein and WWTR1/TAZ. Phosphorylation of YAP1 by LATS2 inhibits its translocation into the nucleus to regulate cellular genes important for cell proliferation, cell death, and cell migration. STK3/MST2 and STK4/MST1 are required to repress proliferation of mature hepatocytes, to prevent activation of facultative adult liver stem cells (oval cells), and to inhibit tumor formation. Phosphorylates NKX2-1. Phosphorylates NEK2 and plays a role in centrosome disjunction by regulating the localization of NEK2 to centrosome, and its ability to phosphorylate CROCC and CEP250. In conjunction with SAV1, activates the transcriptional activity of ESR1 through the modulation of its phosphorylation. Positively regulates RAF1 activation via suppression of the inhibitory phosphorylation of RAF1 on 'Ser-259'. Phosphorylates MOBKL1A and RASSF2. Phosphorylates MOBKL1B on 'Thr-74'. Acts cooperatively with MOBKL1B to activate STK38. In Homo sapiens (Human), this protein is Serine/threonine-protein kinase 3.